The following is a 401-amino-acid chain: Tyrosine--tRNA ligase (401 aa).

The 'HIGH' region signature appears at 42–51 (PTAPDLHLGH). The 'KMSKS' region signature appears at 226–230 (KMSKS). Residue Lys-229 participates in ATP binding. One can recognise an S4 RNA-binding domain in the interval 336 to 397 (IALAQLLKQI…GKRRIAKLSI (62 aa)).

Belongs to the class-I aminoacyl-tRNA synthetase family. TyrS type 2 subfamily. Homodimer.

Its subcellular location is the cytoplasm. The catalysed reaction is tRNA(Tyr) + L-tyrosine + ATP = L-tyrosyl-tRNA(Tyr) + AMP + diphosphate + H(+). Its function is as follows. Catalyzes the attachment of tyrosine to tRNA(Tyr) in a two-step reaction: tyrosine is first activated by ATP to form Tyr-AMP and then transferred to the acceptor end of tRNA(Tyr). This is Tyrosine--tRNA ligase from Legionella pneumophila (strain Paris).